Reading from the N-terminus, the 390-residue chain is L-seryl-tRNA(Sec) selenium transferase (390 aa).

The residue at position 225 (Lys225) is an N6-(pyridoxal phosphate)lysine.

This sequence belongs to the SelA family. It depends on pyridoxal 5'-phosphate as a cofactor.

The protein localises to the cytoplasm. It catalyses the reaction L-seryl-tRNA(Sec) + selenophosphate + H(+) = L-selenocysteinyl-tRNA(Sec) + phosphate. Its pathway is aminoacyl-tRNA biosynthesis; selenocysteinyl-tRNA(Sec) biosynthesis; selenocysteinyl-tRNA(Sec) from L-seryl-tRNA(Sec) (bacterial route): step 1/1. Its function is as follows. Converts seryl-tRNA(Sec) to selenocysteinyl-tRNA(Sec) required for selenoprotein biosynthesis. This is L-seryl-tRNA(Sec) selenium transferase from Helicobacter pylori (strain P12).